The chain runs to 518 residues: ATP synthase F(1) complex catalytic subunit beta, mitochondrial (518 aa).

Residues G199, V200, G201, K202, T203, and V204 each coordinate ADP. Position 199 (G199) interacts with ATP. The phosphate site is built by G199, V200, G201, K202, and T203. Residues G201, K202, T203, and V204 each contribute to the ATP site. T203 contacts Mg(2+). E228 contacts Mg(2+). ATP is bound at residue R229.

This sequence belongs to the ATPase alpha/beta chains family. In terms of assembly, homotrimer. Component of the ATP synthase complex composed at least of ATP5F1A/subunit alpha, ATP5F1B/subunit beta, ATP5MC1/subunit c (homooctomer), MT-ATP6/subunit a, MT-ATP8/subunit 8, ATP5ME/subunit e, ATP5MF/subunit f, ATP5MG/subunit g, ATP5MK/subunit k, ATP5MJ/subunit j, ATP5F1C/subunit gamma, ATP5F1D/subunit delta, ATP5F1E/subunit epsilon, ATP5PF/subunit F6, ATP5PB/subunit b, ATP5PD/subunit d, ATP5PO/subunit OSCP. ATP synthase complex consists of a soluble F(1) head domain (subunits alpha(3) and beta(3)) - the catalytic core - and a membrane F(0) domain - the membrane proton channel (subunits c, a, 8, e, f, g, k and j). These two domains are linked by a central stalk (subunits gamma, delta, and epsilon) rotating inside the F1 region and a stationary peripheral stalk (subunits F6, b, d, and OSCP).

The protein resides in the mitochondrion inner membrane. The enzyme catalyses ATP + H2O + 4 H(+)(in) = ADP + phosphate + 5 H(+)(out). Catalytic subunit beta, of the mitochondrial membrane ATP synthase complex (F(1)F(0) ATP synthase or Complex V) that produces ATP from ADP in the presence of a proton gradient across the membrane which is generated by electron transport complexes of the respiratory chain. ATP synthase complex consist of a soluble F(1) head domain - the catalytic core - and a membrane F(1) domain - the membrane proton channel. These two domains are linked by a central stalk rotating inside the F(1) region and a stationary peripheral stalk. During catalysis, ATP synthesis in the catalytic domain of F(1) is coupled via a rotary mechanism of the central stalk subunits to proton translocation. In vivo, can only synthesize ATP although its ATP hydrolase activity can be activated artificially in vitro. With the subunit alpha (ATP5F1A), forms the catalytic core in the F(1) domain. The polypeptide is ATP synthase F(1) complex catalytic subunit beta, mitochondrial (Cyprinus carpio (Common carp)).